The primary structure comprises 316 residues: Olfactory receptor 2H1 (316 aa).

Residues M1–R23 are Extracellular-facing. An N-linked (GlcNAc...) asparagine glycan is attached at N3. The chain crosses the membrane as a helical span at residues T24–S47. Residues V48–S55 lie on the Cytoplasmic side of the membrane. The chain crosses the membrane as a helical span at residues P56 to P77. At Q78–Q98 the chain is on the extracellular side. A disulfide bond links C95 and C187. The helical transmembrane segment at L99–F118 threads the bilayer. Topologically, residues D119 to R137 are cytoplasmic. The chain crosses the membrane as a helical span at residues L138–V156. The Extracellular segment spans residues Q157 to N193. The chain crosses the membrane as a helical span at residues E194–G217. The Cytoplasmic segment spans residues A218–K234. Residues A235–Y257 traverse the membrane as a helical segment. The Extracellular portion of the chain corresponds to L258–K270. Residues F271–L290 form a helical membrane-spanning segment. The Cytoplasmic segment spans residues R291–A316.

This sequence belongs to the G-protein coupled receptor 1 family.

The protein resides in the cell membrane. Odorant receptor. The sequence is that of Olfactory receptor 2H1 (OR2H1) from Homo sapiens (Human).